Consider the following 260-residue polypeptide: Cystine transporter (260 aa).

In terms of domain architecture, PQ-loop 1 spans 1 to 67 (MVSLDDILGI…QLYCWKMTGD (67 aa)). The next 5 membrane-spanning stretches (helical) occupy residues 7–28 (ILGI…ITNW), 40–62 (FVML…LYCW), 81–102 (FWYC…VAGA), 118–138 (WYLR…VQFM), and 151–175 (TLAY…PQVT). Positions 162–212 (KISMSLIKYIPQVTHNSTRKSMDCFPIQGVFLDVTGGIASLLQLIWQLSND) constitute a PQ-loop 2 domain. Residue Asn-177 is glycosylated (N-linked (GlcNAc...) asparagine). The next 2 membrane-spanning stretches (helical) occupy residues 185–205 (CFPI…LLQL) and 227–247 (VGLS…WFVY).

Belongs to the cystinosin family.

The protein localises to the endosome membrane. It localises to the vacuole membrane. It carries out the reaction L-cystine(out) + H(+)(out) = L-cystine(in) + H(+)(in). Cystine/H(+) symporter that mediates export of cystine, the oxidized dimer of cysteine, from vacuoles/endodomes. The protein is Cystine transporter (ERS1) of Saccharomyces cerevisiae (strain ATCC 204508 / S288c) (Baker's yeast).